Here is a 76-residue protein sequence, read N- to C-terminus: Translational regulator CsrA (76 aa).

The protein belongs to the CsrA/RsmA family. As to quaternary structure, homodimer; the beta-strands of each monomer intercalate to form a hydrophobic core, while the alpha-helices form wings that extend away from the core.

The protein localises to the cytoplasm. Its function is as follows. A translational regulator that binds mRNA to regulate translation initiation and/or mRNA stability. Usually binds in the 5'-UTR at or near the Shine-Dalgarno sequence preventing ribosome-binding, thus repressing translation. Its main target seems to be the major flagellin gene, while its function is anatagonized by FliW. This is Translational regulator CsrA from Helicobacter pylori (strain P12).